Here is a 130-residue protein sequence, read N- to C-terminus: Ribonuclease P protein component 2 (130 aa).

Belongs to the eukaryotic/archaeal RNase P protein component 2 family. Consists of a catalytic RNA component and at least 4-5 protein subunits.

The protein resides in the cytoplasm. The enzyme catalyses Endonucleolytic cleavage of RNA, removing 5'-extranucleotides from tRNA precursor.. Its function is as follows. Part of ribonuclease P, a protein complex that generates mature tRNA molecules by cleaving their 5'-ends. The protein is Ribonuclease P protein component 2 of Methanococcus maripaludis (strain C7 / ATCC BAA-1331).